A 341-amino-acid polypeptide reads, in one-letter code: Phenylalanine--tRNA ligase alpha subunit (341 aa).

Glutamate 256 serves as a coordination point for Mg(2+).

Belongs to the class-II aminoacyl-tRNA synthetase family. Phe-tRNA synthetase alpha subunit type 1 subfamily. Tetramer of two alpha and two beta subunits. It depends on Mg(2+) as a cofactor.

The protein localises to the cytoplasm. The catalysed reaction is tRNA(Phe) + L-phenylalanine + ATP = L-phenylalanyl-tRNA(Phe) + AMP + diphosphate + H(+). The chain is Phenylalanine--tRNA ligase alpha subunit from Leptospira borgpetersenii serovar Hardjo-bovis (strain JB197).